Reading from the N-terminus, the 86-residue chain is MPKRVLTGTVVSDKTDKTVVVKVERRVKHALYGKIIKRSKKYHAHDETNEYREGETVRIEETAPMSKLKTWKVIERVDTHATPNHA.

Belongs to the universal ribosomal protein uS17 family. Part of the 30S ribosomal subunit.

One of the primary rRNA binding proteins, it binds specifically to the 5'-end of 16S ribosomal RNA. The polypeptide is Small ribosomal subunit protein uS17 (Rhizorhabdus wittichii (strain DSM 6014 / CCUG 31198 / JCM 15750 / NBRC 105917 / EY 4224 / RW1) (Sphingomonas wittichii)).